The chain runs to 143 residues: Probable prefoldin subunit 2 (143 aa).

It belongs to the prefoldin subunit beta family. As to quaternary structure, heterohexamer of two PFD-alpha type and four PFD-beta type subunits.

Its function is as follows. Binds specifically to cytosolic chaperonin (c-CPN) and transfers target proteins to it. Binds to nascent polypeptide chain and promotes folding in an environment in which there are many competing pathways for nonnative proteins. The chain is Probable prefoldin subunit 2 from Drosophila melanogaster (Fruit fly).